Reading from the N-terminus, the 323-residue chain is Phosphopantothenate--cysteine ligase 2 (323 aa).

The protein belongs to the PPC synthetase family. Homodimer.

It catalyses the reaction (R)-4'-phosphopantothenate + L-cysteine + CTP = N-[(R)-4-phosphopantothenoyl]-L-cysteine + CMP + diphosphate + H(+). The protein operates within cofactor biosynthesis; coenzyme A biosynthesis; CoA from (R)-pantothenate: step 2/5. Functionally, catalyzes the first step in the biosynthesis of coenzyme A from vitamin B5, where cysteine is conjugated to 4'-phosphopantothenate to form 4-phosphopantothenoylcysteine. The chain is Phosphopantothenate--cysteine ligase 2 from Oryza sativa subsp. japonica (Rice).